Reading from the N-terminus, the 645-residue chain is Chaperone protein DnaK (645 aa).

Position 200 is a phosphothreonine; by autocatalysis (T200). Residues 603–645 (AYSAQKDSGTSTDSTASDTSGNPEERVVDSEYQEIKKDDEDKK) form a disordered region. The span at 609 to 623 (DSGTSTDSTASDTSG) shows a compositional bias: low complexity. Positions 625–645 (PEERVVDSEYQEIKKDDEDKK) are enriched in basic and acidic residues.

Belongs to the heat shock protein 70 family.

Its function is as follows. Acts as a chaperone. The sequence is that of Chaperone protein DnaK from Anaplasma marginale (strain St. Maries).